A 117-amino-acid polypeptide reads, in one-letter code: Putative cysteine proteinase inhibitor 7 (117 aa).

Residues Met1–Ala24 form the signal peptide. The 57-residue stretch at Gly28–Ala84 folds into the Cystatin domain. A Secondary area of contact motif is present at residues Gln71–Gly75.

Belongs to the cystatin family. Phytocystatin subfamily.

It is found in the secreted. Its function is as follows. Specific inhibitor of cysteine proteinases. Probably involved in the regulation of endogenous processes and in defense against pests and pathogens. The sequence is that of Putative cysteine proteinase inhibitor 7 from Oryza sativa subsp. japonica (Rice).